Reading from the N-terminus, the 1381-residue chain is DNA-directed RNA polymerase subunit beta (1381 aa).

It belongs to the RNA polymerase beta chain family. As to quaternary structure, the RNAP catalytic core consists of 2 alpha, 1 beta, 1 beta' and 1 omega subunit. When a sigma factor is associated with the core the holoenzyme is formed, which can initiate transcription.

The catalysed reaction is RNA(n) + a ribonucleoside 5'-triphosphate = RNA(n+1) + diphosphate. In terms of biological role, DNA-dependent RNA polymerase catalyzes the transcription of DNA into RNA using the four ribonucleoside triphosphates as substrates. This is DNA-directed RNA polymerase subunit beta from Sulfurimonas denitrificans (strain ATCC 33889 / DSM 1251) (Thiomicrospira denitrificans (strain ATCC 33889 / DSM 1251)).